Consider the following 513-residue polypeptide: Activin receptor type-2A (513 aa).

The N-terminal stretch at 1–19 (MGAAAKLAFAVFLISCSSG) is a signal peptide. Residues 20 to 135 (AILGRSETQE…TSNPVTPKPP (116 aa)) lie on the Extracellular side of the membrane. 5 disulfide bridges follow: cysteine 30-cysteine 60, cysteine 50-cysteine 78, cysteine 85-cysteine 104, cysteine 91-cysteine 103, and cysteine 105-cysteine 110. 2 N-linked (GlcNAc...) asparagine glycosylation sites follow: asparagine 43 and asparagine 66. Residues 136–161 (YYNILLYSLVPLMLIAGIVICAFWVY) form a helical membrane-spanning segment. Residues 162–513 (RHHKMAYPPV…VDFPPKESSL (352 aa)) lie on the Cytoplasmic side of the membrane. Residues 192–485 (LQLLEVKARG…GERITQMQRL (294 aa)) enclose the Protein kinase domain. ATP is bound by residues 198–206 (KARGRFGCV) and lysine 219. The Proton acceptor role is filled by aspartate 322.

The protein belongs to the protein kinase superfamily. TKL Ser/Thr protein kinase family. TGFB receptor subfamily. In terms of assembly, part of a complex consisting of MAGI2/ARIP1, ACVR2A, ACVR1B and SMAD3. Interacts with MAGI2/ARIP1. Interacts with type I receptor ACVR1. Interacts with BMP7. Interacts with TSC22D1/TSC-22. Interacts with activin A/INHBA. Requires Mg(2+) as cofactor. Mn(2+) is required as a cofactor.

Its subcellular location is the cell membrane. It carries out the reaction L-threonyl-[receptor-protein] + ATP = O-phospho-L-threonyl-[receptor-protein] + ADP + H(+). It catalyses the reaction L-seryl-[receptor-protein] + ATP = O-phospho-L-seryl-[receptor-protein] + ADP + H(+). Functionally, on ligand binding, forms a receptor complex consisting of two type II and two type I transmembrane serine/threonine kinases. Type II receptors phosphorylate and activate type I receptors which autophosphorylate, then bind and activate SMAD transcriptional regulators. Receptor for activin A, activin B and inhibin A. Mediates induction of adipogenesis by GDF6. The sequence is that of Activin receptor type-2A from Homo sapiens (Human).